Consider the following 260-residue polypeptide: MSVLDDIVAGVRLDLAERESATSLADLRAALADVDPPRDPMPHFRAAGSSVIAEVKRRSPSKGDLATIPDPAELARSYAAGGAAAISVLTEQRRFGGSLADLRAVRAAVDTPILRKDFIVSSYQVVEARAAGADLVLLIVAALDDDDLRRLHDEARELGLTALVEVHDEPETERAVALGAELVGVNARNLKTLAIHDDTFGRLAPLVPDDRVKVAESGIFGPDDVARFVREGARAVLVGEALVKDGDPEGAVRRMTGVES.

It belongs to the TrpC family.

It catalyses the reaction 1-(2-carboxyphenylamino)-1-deoxy-D-ribulose 5-phosphate + H(+) = (1S,2R)-1-C-(indol-3-yl)glycerol 3-phosphate + CO2 + H2O. Its pathway is amino-acid biosynthesis; L-tryptophan biosynthesis; L-tryptophan from chorismate: step 4/5. This chain is Indole-3-glycerol phosphate synthase, found in Nocardioides sp. (strain ATCC BAA-499 / JS614).